Consider the following 403-residue polypeptide: S-adenosylmethionine synthase (403 aa).

Residue H17 participates in ATP binding. Residue D19 coordinates Mg(2+). K(+) is bound at residue E45. L-methionine is bound by residues E58 and Q104. Residues Q104–T114 form a flexible loop region. ATP is bound by residues D179–K181, K250–F251, D259, R265–K266, A282, and K286. D259 contributes to the L-methionine binding site. Residue K290 coordinates L-methionine.

Belongs to the AdoMet synthase family. Homotetramer; dimer of dimers. Mg(2+) is required as a cofactor. K(+) serves as cofactor.

The protein resides in the cytoplasm. It carries out the reaction L-methionine + ATP + H2O = S-adenosyl-L-methionine + phosphate + diphosphate. It participates in amino-acid biosynthesis; S-adenosyl-L-methionine biosynthesis; S-adenosyl-L-methionine from L-methionine: step 1/1. Catalyzes the formation of S-adenosylmethionine (AdoMet) from methionine and ATP. The overall synthetic reaction is composed of two sequential steps, AdoMet formation and the subsequent tripolyphosphate hydrolysis which occurs prior to release of AdoMet from the enzyme. This is S-adenosylmethionine synthase from Mycobacterium ulcerans (strain Agy99).